A 460-amino-acid chain; its full sequence is UDP-N-acetylmuramoylalanine--D-glutamate ligase (460 aa).

120-126 (GSNGKTT) contributes to the ATP binding site.

The protein belongs to the MurCDEF family.

It is found in the cytoplasm. The enzyme catalyses UDP-N-acetyl-alpha-D-muramoyl-L-alanine + D-glutamate + ATP = UDP-N-acetyl-alpha-D-muramoyl-L-alanyl-D-glutamate + ADP + phosphate + H(+). It participates in cell wall biogenesis; peptidoglycan biosynthesis. Its function is as follows. Cell wall formation. Catalyzes the addition of glutamate to the nucleotide precursor UDP-N-acetylmuramoyl-L-alanine (UMA). In Lactobacillus gasseri (strain ATCC 33323 / DSM 20243 / BCRC 14619 / CIP 102991 / JCM 1131 / KCTC 3163 / NCIMB 11718 / NCTC 13722 / AM63), this protein is UDP-N-acetylmuramoylalanine--D-glutamate ligase.